Reading from the N-terminus, the 678-residue chain is Beta-catenin-like protein hmp-2 (678 aa).

ARM repeat units follow at residues 153 to 192, 280 to 319, 320 to 359, 362 to 403, and 409 to 448; these read RGGPLLIFRSGGLAEIIRMLYDSLESVVHYAVTTLRNLLM, PSNKPALISLGCLPALYVELCTAKDERSQTAILVAMRNLS, DSATNEENLTQLIIKLLEIIRVANDGMTACACGTLSNLTC, TRNK…HCTA, and EEAQSELRFCQAFPVILDQLETLRTPVIKAALGVIRNSAL.

This sequence belongs to the beta-catenin family. Component of a core catenin-cadherin complex consisting of hmr-1, hmp-1 and hmp-2; the complex localizes to adherens junctions. Interacts with hmr-1; the interaction is direct. May interact with hmp-1. Interacts with frk-1. Epidermal cells.

The protein localises to the cell junction. It localises to the adherens junction. Required for cell migration during body enclosure and cell shape changes during body elongation. Plays a role in recruitment of the cadherin protein hmr-1 to adherens junctions. The protein is Beta-catenin-like protein hmp-2 (hmp-2) of Caenorhabditis elegans.